The primary structure comprises 455 residues: Golgi pH regulator (455 aa).

A run of 2 helical transmembrane segments spans residues 5–25 (ADSV…WLFF) and 46–66 (VTFA…LGLL). N67 is a glycosylation site (N-linked (GlcNAc...) asparagine). 3 helical membrane-spanning segments follow: residues 79 to 99 (LCVI…YFVV), 111 to 131 (LFSC…GDPF), and 150 to 170 (VGVI…VNCP). N180 carries N-linked (GlcNAc...) asparagine glycosylation. The next 4 membrane-spanning stretches (helical) occupy residues 290–310 (GYFF…NIVF), 343–363 (ISFI…LITL), 378–398 (VIVL…VLLI), and 425–445 (WFDV…YLAH).

Belongs to the Golgi pH regulator (TC 1.A.38) family. In terms of assembly, homotrimer.

It is found in the golgi apparatus membrane. The catalysed reaction is iodide(out) = iodide(in). It carries out the reaction chloride(in) = chloride(out). The enzyme catalyses bromide(in) = bromide(out). It catalyses the reaction fluoride(in) = fluoride(out). Voltage-gated channel that enables the transfer of anions such as iodide, chloride, bromide and fluoride which may function in counter-ion conductance and participates in Golgi acidification. The polypeptide is Golgi pH regulator (gpr89-b) (Xenopus laevis (African clawed frog)).